We begin with the raw amino-acid sequence, 604 residues long: Prostaglandin G/H synthase 2 (604 aa).

The signal sequence occupies residues 1–17 (MLARALLLCAAVALSHA). Residues 18 to 55 (ANPCCSNPCQNRGVCMTMGFDQYKCDCTRTGFYGENCS) form the EGF-like domain. Cystine bridges form between C21/C32, C22/C145, C26/C42, and C44/C54. N53 is a glycosylation site (N-linked (GlcNAc...) asparagine). R106 provides a ligand contact to substrate. N130 is a glycosylation site (N-linked (GlcNAc...) asparagine). Catalysis depends on H193, which acts as the Proton acceptor. Y341 contributes to the substrate binding site. Residue Y371 is the For cyclooxygenase activity of the active site. Residue H374 coordinates heme b. N-linked (GlcNAc...) asparagine glycosylation is present at N396. C526 is subject to S-nitrosocysteine. Cysteines 555 and 561 form a disulfide. The residue at position 565 (S565) is an O-acetylserine. An N-linked (GlcNAc...) asparagine glycan is attached at N580.

The protein belongs to the prostaglandin G/H synthase family. Homodimer. Heme b serves as cofactor. In terms of processing, S-nitrosylation by NOS2 (iNOS) activates enzyme activity. S-nitrosylation may take place on different Cys residues in addition to Cys-526. Acetylated at Ser-565 by SPHK1. During neuroinflammation, acetylation by SPHK1 promotes neuronal secretion of specialized preresolving mediators (SPMs), especially 15-R-lipoxin A4, which results in an increase of phagocytic microglia. In terms of tissue distribution, highest expression in kidney and urinary bladder.

It localises to the microsome membrane. It is found in the endoplasmic reticulum membrane. The protein localises to the nucleus inner membrane. The protein resides in the nucleus outer membrane. The catalysed reaction is (5Z,8Z,11Z,14Z)-eicosatetraenoate + AH2 + 2 O2 = prostaglandin H2 + A + H2O. The enzyme catalyses (5Z,8Z,11Z,14Z)-eicosatetraenoate + 2 O2 = prostaglandin G2. It carries out the reaction prostaglandin G2 + AH2 = prostaglandin H2 + A + H2O. It catalyses the reaction (5Z,8Z,11Z,14Z,17Z)-eicosapentaenoate + 2 O2 = prostaglandin G3. The catalysed reaction is prostaglandin G3 + AH2 = prostaglandin H3 + A + H2O. The enzyme catalyses (8Z,11Z,14Z)-eicosatrienoate + 2 O2 = prostaglandin G1. It carries out the reaction prostaglandin G1 + AH2 = prostaglandin H1 + A + H2O. It catalyses the reaction 2-(5Z,8Z,11Z,14Z)-eicosatetraenoyl-sn-glycero-3-phosphoethanolamine + 2 O2 = 2-(prostaglandin G2)-sn-glycero-3-phosphoethanolamine. The catalysed reaction is 2-(prostaglandin G2)-sn-glycero-3-phosphoethanolamine + AH2 = 2-(prostaglandin H2)-sn-glycero-3-phosphoethanolamine + A + H2O. The enzyme catalyses 2-(5Z,8Z,11Z,14Z)-eicosatetraenoyl-sn-glycero-3-phosphocholine + 2 O2 = 2-(prostaglandin G2)-sn-glycero-3-phosphocholine. It carries out the reaction 2-(prostaglandin G2)-sn-glycero-3-phosphocholine + AH2 = 2-(prostaglandin H2)-sn-glycero-3-phosphocholine + A + H2O. It catalyses the reaction (15S)-hydroperoxy-(5Z,8Z,11Z,13E)-eicosatetraenoate + AH2 = (15S)-hydroxy-(5Z,8Z,11Z,13E)-eicosatetraenoate + A + H2O. The catalysed reaction is 2-(5Z,8Z,11Z,14Z)-eicosatetraenoyl-sn-glycero-3-phosphocholine + AH2 + O2 = 2-[(15S)-hydroxy-(5Z,8Z,11Z,13E)-eicosatetraenoyl]-sn-glycero-3-phosphocholine + A + H2O. The enzyme catalyses 2-(5Z,8Z,11Z,14Z)-eicosatetraenoyl-sn-glycero-3-phosphocholine + AH2 + O2 = 2-[(15R)-hydroxy-(5Z,8Z,11Z,13E)-eicosatetraenoyl]-sn-glycero-3-phosphocholine + A + H2O. It carries out the reaction 2-(5Z,8Z,11Z,14Z)-eicosatetraenoyl-sn-glycero-3-phosphocholine + AH2 + O2 = 2-[(11R)-hydroxy-(5Z,8Z,12E,14Z)-eicosatetraenoyl]-sn-glycero-3-phosphocholine + A + H2O. It catalyses the reaction (9Z,12Z)-octadecadienoate + AH2 + O2 = 9-hydroxy-(10E,12Z)-octadecadienoate + A + H2O. The catalysed reaction is (9Z,12Z)-octadecadienoate + AH2 + O2 = 13-hydroxy-(9Z,11E)-octadecadienoate + A + H2O. The enzyme catalyses (5Z,8Z,11Z,14Z)-eicosatetraenoate + AH2 + O2 = (15R)-hydroxy-(5Z,8Z,11Z,13E)-eicosatetraenoate + A + H2O. It carries out the reaction (5Z,8Z,11Z,14Z)-eicosatetraenoate + AH2 + O2 = (11R)-hydroxy-(5Z,8Z,12E,14Z)-eicosatetraenoate + A + H2O. It catalyses the reaction (5Z,8Z,11Z,14Z,17Z)-eicosapentaenoate + AH2 + O2 = (11R)-hydroxy-(5Z,8Z,12E,14Z,17Z)-eicosapentaenoate + A + H2O. The catalysed reaction is (5Z,8Z,11Z,14Z,17Z)-eicosapentaenoate + AH2 + O2 = (18S)-hydroxy-(5Z,8Z,11Z,14Z,16E)-eicosapentaenoate + A + H2O. The enzyme catalyses (5Z,8Z,11Z,14Z,17Z)-eicosapentaenoate + AH2 + O2 = (18R)-hydroxy-(5Z,8Z,11Z,14Z,16E)-eicosapentaenoate + A + H2O. It carries out the reaction (5Z,8Z,11Z,14Z,17Z)-eicosapentaenoate + AH2 + O2 = (15R)-hydroxy-(5Z,8Z,11Z,13E,17Z)-eicosapentaenoate + A + H2O. It catalyses the reaction (5Z,8Z,11Z,14Z,17Z)-eicosapentaenoate + AH2 + O2 = (15S)-hydroxy-(5Z,8Z,11Z,13E,17Z)-eicosapentaenoate + A + H2O. The catalysed reaction is (7Z,10Z,13Z,16Z,19Z)-docosapentaenoate + AH2 + O2 = 13R-hydroxy-(7Z,10Z,14E,16Z,19Z)-docosapentaenoate + A + H2O. The enzyme catalyses (4Z,7Z,10Z,13Z,16Z,19Z)-docosahexaenoate + AH2 + O2 = 13-hydroxy-(4Z,7Z,10Z,14E,16Z,19Z)-docosahexaenoate + A + H2O. It carries out the reaction (5S)-hydroxy-(6E,8Z,11Z,14Z)-eicosatetraenoate + AH2 + O2 = (5S,15R)-dihydroxy-(6E,8Z,11Z,13E)-eicosatetraenoate + A + H2O. It catalyses the reaction (4Z,7Z,10Z,13Z,16Z,19Z)-docosahexaenoate + AH2 + O2 = 17R-hydroxy-(4Z,7Z,10Z,13Z,15E,19Z)-docosahexaenoate + A + H2O. The catalysed reaction is (5S)-hydroxy-(6E,8Z,11Z,14Z)-eicosatetraenoate + AH2 + O2 = (5S,15S)-dihydroxy-(6E,8Z,11Z,13E)-eicosatetraenoate + A + H2O. The enzyme catalyses (5S)-hydroxy-(6E,8Z,11Z,14Z)-eicosatetraenoate + AH2 + O2 = (5S,11R)-dihydroxy-(6E,8Z,12E,14Z)-eicosatetraenoate + A + H2O. It carries out the reaction 2-(5Z,8Z,11Z,14Z-eicosatetraenoyl)-glycerol + 2 O2 = 2-glyceryl-prostaglandin G2. It catalyses the reaction 2-glyceryl-prostaglandin G2 + AH2 = 2-glyceryl-prostaglandin H2 + A + H2O. The catalysed reaction is (5Z,8Z,11Z,14Z)-eicosatetraenoate + O2 = (15R)-hydroperoxy-(5Z,8Z,11Z,13E)-eicosatetraenoate. The enzyme catalyses (5Z,8Z,11Z,14Z)-eicosatetraenoate + O2 = 11R-hydroperoxy-(5Z,8Z,12E,14Z)-eicosatetraenoate. It carries out the reaction (9Z,12Z)-octadecadienoate + AH2 + O2 = (9R)-hydroxy-(10E,12Z)-octadecadienoate + A + H2O. It catalyses the reaction (9Z,12Z)-octadecadienoate + AH2 + O2 = (9S)-hydroxy-(10E,12Z)-octadecadienoate + A + H2O. The catalysed reaction is (9Z,12Z)-octadecadienoate + AH2 + O2 = (13S)-hydroxy-(9Z,11E)-octadecadienoate + A + H2O. The enzyme catalyses (9Z,12Z)-octadecadienoate + AH2 + O2 = (13R)-hydroxy-(9Z,11E)-octadecadienoate + A + H2O. It participates in lipid metabolism; prostaglandin biosynthesis. Dual cyclooxygenase and peroxidase in the biosynthesis pathway of prostanoids, a class of C20 oxylipins mainly derived from arachidonate ((5Z,8Z,11Z,14Z)-eicosatetraenoate, AA, C20:4(n-6)), with a particular role in the inflammatory response. The cyclooxygenase activity oxygenates AA to the hydroperoxy endoperoxide prostaglandin G2 (PGG2), and the peroxidase activity reduces PGG2 to the hydroxy endoperoxide prostaglandin H2 (PGH2), the precursor of all 2-series prostaglandins and thromboxanes. This complex transformation is initiated by abstraction of hydrogen at carbon 13 (with S-stereochemistry), followed by insertion of molecular O2 to form the endoperoxide bridge between carbon 9 and 11 that defines prostaglandins. The insertion of a second molecule of O2 (bis-oxygenase activity) yields a hydroperoxy group in PGG2 that is then reduced to PGH2 by two electrons. Similarly catalyzes successive cyclooxygenation and peroxidation of dihomo-gamma-linoleate (DGLA, C20:3(n-6)) and eicosapentaenoate (EPA, C20:5(n-3)) to corresponding PGH1 and PGH3, the precursors of 1- and 3-series prostaglandins. In an alternative pathway of prostanoid biosynthesis, converts 2-arachidonoyl lysophopholipids to prostanoid lysophopholipids, which are then hydrolyzed by intracellular phospholipases to release free prostanoids. Metabolizes 2-arachidonoyl glycerol yielding the glyceryl ester of PGH2, a process that can contribute to pain response. Generates lipid mediators from n-3 and n-6 polyunsaturated fatty acids (PUFAs) via a lipoxygenase-type mechanism. Oxygenates PUFAs to hydroperoxy compounds and then reduces them to corresponding alcohols. Plays a role in the generation of resolution phase interaction products (resolvins) during both sterile and infectious inflammation. Metabolizes docosahexaenoate (DHA, C22:6(n-3)) to 17R-HDHA, a precursor of the D-series resolvins (RvDs). As a component of the biosynthetic pathway of E-series resolvins (RvEs), converts eicosapentaenoate (EPA, C20:5(n-3)) primarily to 18S-HEPE that is further metabolized by ALOX5 and LTA4H to generate 18S-RvE1 and 18S-RvE2. In vascular endothelial cells, converts docosapentaenoate (DPA, C22:5(n-3)) to 13R-HDPA, a precursor for 13-series resolvins (RvTs) shown to activate macrophage phagocytosis during bacterial infection. In activated leukocytes, contributes to oxygenation of hydroxyeicosatetraenoates (HETE) to diHETES (5,15-diHETE and 5,11-diHETE). Can also use linoleate (LA, (9Z,12Z)-octadecadienoate, C18:2(n-6)) as substrate and produce hydroxyoctadecadienoates (HODEs) in a regio- and stereospecific manner,being (9R)-HODE ((9R)-hydroxy-(10E,12Z)-octadecadienoate) and (13S)-HODE ((13S)-hydroxy-(9Z,11E)-octadecadienoate) its major products. During neuroinflammation, plays a role in neuronal secretion of specialized preresolving mediators (SPMs) 15R-lipoxin A4 that regulates phagocytic microglia. The polypeptide is Prostaglandin G/H synthase 2 (PTGS2) (Oryctolagus cuniculus (Rabbit)).